A 286-amino-acid polypeptide reads, in one-letter code: Formyltetrahydrofolate deformylase (286 aa).

The ACT domain maps to 8–88 (VLTLQCPEGI…MDWQLRERGQ (81 aa)). Residue aspartate 230 is part of the active site.

It belongs to the PurU family.

The enzyme catalyses (6R)-10-formyltetrahydrofolate + H2O = (6S)-5,6,7,8-tetrahydrofolate + formate + H(+). Its pathway is purine metabolism; IMP biosynthesis via de novo pathway; formate from 10-formyl-5,6,7,8-tetrahydrofolate: step 1/1. Its function is as follows. Catalyzes the hydrolysis of 10-formyltetrahydrofolate (formyl-FH4) to formate and tetrahydrofolate (FH4). The protein is Formyltetrahydrofolate deformylase of Corynebacterium sp. (strain P-1).